Consider the following 116-residue polypeptide: MSLAIDLEVKKDVLCIRLQGELDHHTAESLRASVTKAIEENGIRHLVLNLEQLSFMDSSGLGVILGRYKQIKQKNGEMIVCAISPAVKRLFELSGLFKIIRLDESEQYALHRLGVA.

The region spanning 3-113 is the STAS domain; it reads LAIDLEVKKD…ESEQYALHRL (111 aa). Phosphoserine is present on S58.

It belongs to the anti-sigma-factor antagonist family. Post-translationally, phosphorylated by SpoIIAB on a serine residue.

In terms of biological role, in the phosphorylated form it could act as an anti-anti-sigma factor that counteracts SpoIIAB and thus releases sigma f from inhibition. This Heyndrickxia coagulans (Weizmannia coagulans) protein is Anti-sigma F factor antagonist (spoIIAA).